Consider the following 378-residue polypeptide: Alcohol dehydrogenase class-3 (378 aa).

Ala1 carries the post-translational modification N-acetylalanine. Cys46 provides a ligand contact to Zn(2+). Residue His47 coordinates NAD(+). 2 residues coordinate an alcohol: Thr48 and His68. Positions 68, 69, 98, 101, 104, 112, and 176 each coordinate Zn(2+). Residues 201 to 206 (GLGTVG), Asp225, Lys230, 294 to 296 (VGV), 319 to 321 (TAF), and Arg371 each bind NAD(+).

It belongs to the zinc-containing alcohol dehydrogenase family. Class-III subfamily. As to quaternary structure, homodimer. Zn(2+) is required as a cofactor.

Its subcellular location is the cytoplasm. The catalysed reaction is a primary alcohol + NAD(+) = an aldehyde + NADH + H(+). It catalyses the reaction a secondary alcohol + NAD(+) = a ketone + NADH + H(+). The enzyme catalyses S-(hydroxymethyl)glutathione + NADP(+) = S-formylglutathione + NADPH + H(+). It carries out the reaction S-(hydroxymethyl)glutathione + NAD(+) = S-formylglutathione + NADH + H(+). Functionally, class-III ADH is remarkably ineffective in oxidizing ethanol, but it readily catalyzes the oxidation of long-chain primary alcohols and the oxidation of S-(hydroxymethyl) glutathione. The sequence is that of Alcohol dehydrogenase class-3 from Pisum sativum (Garden pea).